The chain runs to 307 residues: UDP-N-acetylenolpyruvoylglucosamine reductase (307 aa).

One can recognise an FAD-binding PCMH-type domain in the interval 33–198 (KVGGPVDILV…LEAILKLSLG (166 aa)). Arg177 is a catalytic residue. Ser227 functions as the Proton donor in the catalytic mechanism. The active site involves Glu297.

The protein belongs to the MurB family. The cofactor is FAD.

Its subcellular location is the cytoplasm. The enzyme catalyses UDP-N-acetyl-alpha-D-muramate + NADP(+) = UDP-N-acetyl-3-O-(1-carboxyvinyl)-alpha-D-glucosamine + NADPH + H(+). It participates in cell wall biogenesis; peptidoglycan biosynthesis. In terms of biological role, cell wall formation. In Clostridium tetani (strain Massachusetts / E88), this protein is UDP-N-acetylenolpyruvoylglucosamine reductase.